Reading from the N-terminus, the 74-residue chain is Exodeoxyribonuclease 7 small subunit (74 aa).

Belongs to the XseB family. Heterooligomer composed of large and small subunits.

It is found in the cytoplasm. It carries out the reaction Exonucleolytic cleavage in either 5'- to 3'- or 3'- to 5'-direction to yield nucleoside 5'-phosphates.. In terms of biological role, bidirectionally degrades single-stranded DNA into large acid-insoluble oligonucleotides, which are then degraded further into small acid-soluble oligonucleotides. The sequence is that of Exodeoxyribonuclease 7 small subunit from Clostridium botulinum (strain Eklund 17B / Type B).